We begin with the raw amino-acid sequence, 98 residues long: Integration host factor subunit alpha (98 aa).

A disordered region spans residues 49–72 (FGNFDLRDKNQRPGRNPKTGEDIP).

Belongs to the bacterial histone-like protein family. Heterodimer of an alpha and a beta chain.

In terms of biological role, this protein is one of the two subunits of integration host factor, a specific DNA-binding protein that functions in genetic recombination as well as in transcriptional and translational control. The protein is Integration host factor subunit alpha of Shewanella loihica (strain ATCC BAA-1088 / PV-4).